The chain runs to 364 residues: MGSTGETQMSPAQILDEEANFAMQLISSSVLPMVLKTAIELDLLEIMAKAGPGALLSPSDIASHLPTKNPDAPVMLDRILRLLASYSILICSLRDLPDGKVERLYGLASVCKFLTKNEDGVSVSPLCLMNQDKVLMESWYHLKDAILEGGIPFNKAYGMTAFEYHGTDPRFNKVFNKGMSDHSKMAMKKILESYKGFEGLASLVDVGGGTGAVVSTIVSKYPSIKGINFDLPHVIADAPAFPGVENVGGDMFVSVPKADAVFMKWICHDWSDEHCLRLLKNCYDALPENGKVILVECILPVAPDTSLATKGVMHVDAIMLAHNPGGKERTDKEFEGLARGAGFKGFEVMCCAFNTHVIEFRKQA.

129 to 135 (MNQDKVL) contributes to the substrate binding site. A substrate binding region spans residues 161–179 (AFEYHGTDPRFNKVFNKGM). Residues glycine 207, aspartate 230, aspartate 250, methionine 251, and lysine 264 each contribute to the S-adenosyl-L-methionine site. Histidine 268 serves as the catalytic Proton acceptor.

Belongs to the class I-like SAM-binding methyltransferase superfamily. Cation-independent O-methyltransferase family. COMT subfamily. As to quaternary structure, homodimer.

It catalyses the reaction (E)-caffeate + S-adenosyl-L-methionine = (E)-ferulate + S-adenosyl-L-homocysteine + H(+). It participates in aromatic compound metabolism; phenylpropanoid biosynthesis. Functionally, catalyzes the conversion of caffeic acid to ferulic acid and of 5-hydroxyferulic acid to sinapic acid. The resulting products may subsequently be converted to the corresponding alcohols that are incorporated into lignins. The chain is Caffeic acid 3-O-methyltransferase 3 (HOMT3) from Populus kitakamiensis (Aspen).